Reading from the N-terminus, the 518-residue chain is ATP synthase subunit alpha (518 aa).

An ATP-binding site is contributed by 169-176 (GDRQTGKT).

This sequence belongs to the ATPase alpha/beta chains family. F-type ATPases have 2 components, CF(1) - the catalytic core - and CF(0) - the membrane proton channel. CF(1) has five subunits: alpha(3), beta(3), gamma(1), delta(1), epsilon(1). CF(0) has three main subunits: a(1), b(2) and c(9-12). The alpha and beta chains form an alternating ring which encloses part of the gamma chain. CF(1) is attached to CF(0) by a central stalk formed by the gamma and epsilon chains, while a peripheral stalk is formed by the delta and b chains.

The protein resides in the cell membrane. The enzyme catalyses ATP + H2O + 4 H(+)(in) = ADP + phosphate + 5 H(+)(out). In terms of biological role, produces ATP from ADP in the presence of a proton gradient across the membrane. The alpha chain is a regulatory subunit. The sequence is that of ATP synthase subunit alpha from Mycoplasma pneumoniae (strain ATCC 29342 / M129 / Subtype 1) (Mycoplasmoides pneumoniae).